We begin with the raw amino-acid sequence, 333 residues long: Holliday junction branch migration complex subunit RuvB (333 aa).

A large ATPase domain (RuvB-L) region spans residues 1–182 (MEERLVSGEV…FGVISRLEYY (182 aa)). Residues Leu21, Arg22, Gly63, Lys66, Thr67, Thr68, 129-131 (EDY), Arg172, Tyr182, and Arg219 each bind ATP. A Mg(2+)-binding site is contributed by Thr67. The small ATPAse domain (RuvB-S) stretch occupies residues 183–253 (HVDQLAQIIE…LAVEALERLQ (71 aa)). The tract at residues 256 to 333 (RLGLDQIDHK…THLGMEVPKR (78 aa)) is head domain (RuvB-H). DNA-binding residues include Arg311 and Arg316.

This sequence belongs to the RuvB family. In terms of assembly, homohexamer. Forms an RuvA(8)-RuvB(12)-Holliday junction (HJ) complex. HJ DNA is sandwiched between 2 RuvA tetramers; dsDNA enters through RuvA and exits via RuvB. An RuvB hexamer assembles on each DNA strand where it exits the tetramer. Each RuvB hexamer is contacted by two RuvA subunits (via domain III) on 2 adjacent RuvB subunits; this complex drives branch migration. In the full resolvosome a probable DNA-RuvA(4)-RuvB(12)-RuvC(2) complex forms which resolves the HJ.

It is found in the cytoplasm. The catalysed reaction is ATP + H2O = ADP + phosphate + H(+). Functionally, the RuvA-RuvB-RuvC complex processes Holliday junction (HJ) DNA during genetic recombination and DNA repair, while the RuvA-RuvB complex plays an important role in the rescue of blocked DNA replication forks via replication fork reversal (RFR). RuvA specifically binds to HJ cruciform DNA, conferring on it an open structure. The RuvB hexamer acts as an ATP-dependent pump, pulling dsDNA into and through the RuvAB complex. RuvB forms 2 homohexamers on either side of HJ DNA bound by 1 or 2 RuvA tetramers; 4 subunits per hexamer contact DNA at a time. Coordinated motions by a converter formed by DNA-disengaged RuvB subunits stimulates ATP hydrolysis and nucleotide exchange. Immobilization of the converter enables RuvB to convert the ATP-contained energy into a lever motion, pulling 2 nucleotides of DNA out of the RuvA tetramer per ATP hydrolyzed, thus driving DNA branch migration. The RuvB motors rotate together with the DNA substrate, which together with the progressing nucleotide cycle form the mechanistic basis for DNA recombination by continuous HJ branch migration. Branch migration allows RuvC to scan DNA until it finds its consensus sequence, where it cleaves and resolves cruciform DNA. This Geobacillus kaustophilus (strain HTA426) protein is Holliday junction branch migration complex subunit RuvB.